Here is a 338-residue protein sequence, read N- to C-terminus: NADH-quinone oxidoreductase subunit H (338 aa).

8 helical membrane passes run 22–42 (VVQA…MSFI), 96–116 (VAMA…ALGV), 121–141 (IGLL…LFGG), 161–181 (ISYE…AGSF), 193–213 (VWFI…GVAV), 249–269 (YVNV…GWLA), 277–297 (FVPP…MFVL), and 315–335 (WKIC…VILM).

Belongs to the complex I subunit 1 family. NDH-1 is composed of 14 different subunits. Subunits NuoA, H, J, K, L, M, N constitute the membrane sector of the complex.

It localises to the cell inner membrane. The enzyme catalyses a quinone + NADH + 5 H(+)(in) = a quinol + NAD(+) + 4 H(+)(out). Its function is as follows. NDH-1 shuttles electrons from NADH, via FMN and iron-sulfur (Fe-S) centers, to quinones in the respiratory chain. The immediate electron acceptor for the enzyme in this species is believed to be ubiquinone. Couples the redox reaction to proton translocation (for every two electrons transferred, four hydrogen ions are translocated across the cytoplasmic membrane), and thus conserves the redox energy in a proton gradient. This subunit may bind ubiquinone. The sequence is that of NADH-quinone oxidoreductase subunit H from Acinetobacter baumannii (strain ATCC 17978 / DSM 105126 / CIP 53.77 / LMG 1025 / NCDC KC755 / 5377).